The following is a 414-amino-acid chain: Ornithine aminotransferase (414 aa).

Cysteine 154 and cysteine 163 form a disulfide bridge. Lysine 262 is subject to N6-(pyridoxal phosphate)lysine.

The protein belongs to the class-III pyridoxal-phosphate-dependent aminotransferase family. Homodimer. Pyridoxal 5'-phosphate is required as a cofactor. The disulfide bond between Cys-154 and Cys-163 is reduced by TRX1 which increases OAT catalytic activity.

Its subcellular location is the cytoplasm. The enzyme catalyses a 2-oxocarboxylate + L-ornithine = L-glutamate 5-semialdehyde + an L-alpha-amino acid. The catalysed reaction is L-ornithine + 2-oxoglutarate = L-glutamate 5-semialdehyde + L-glutamate. It functions in the pathway amino-acid biosynthesis; L-proline biosynthesis; L-glutamate 5-semialdehyde from L-ornithine: step 1/1. With respect to regulation, unlike for mammalian OATs, activity is increased by TRX1-mediated reduction of the disulfide bond between Cys-154 and Cys-163. Binding to TRX1 may also induce conformational changes that facilitate substrate binding. Functionally, catalyzes the transamination of alpha-ketoglutarate with ornithine or N-acetylornithine and of glutamate-5-semialdehyde with glutamate and alanine. The polypeptide is Ornithine aminotransferase (Plasmodium chabaudi chabaudi).